Consider the following 291-residue polypeptide: D-alanyl-D-alanine carboxypeptidase DacB2 (291 aa).

A signal peptide spans 1–22; sequence MRKLMTATAALCACAVTVSAGA. Ser-69 serves as the catalytic Acyl-ester intermediate. Lys-72 acts as the Proton acceptor in catalysis. Ser-124 is a catalytic residue.

This sequence belongs to the peptidase S11 family.

It localises to the periplasm. Its pathway is cell wall biogenesis; peptidoglycan biosynthesis. With respect to regulation, inhibited by the beta-lactam antibiotic meropenem. Inhibited by the non-specific inhibitor phenylmethylsulfonyl fluoride (PMSF). Its function is as follows. Probably cleaves the terminal D-Ala-D-Ala dipeptide of the peptidoglycan stem peptide. Shows significant D,D-carboxypeptidase activity in vitro. Acts on the synthetic penta-peptide substrate Penta-DAP (L-Ala-gamma-D-Gln-DAP-D-Ala-D-Ala). Also shows weak activity on Penta-Lys (L-Ala-gamma-Glu-L-Lys-D-Ala-D-Ala). The catalytic domain binds weakly to peptidoglycan in vitro. Plays an important role in the maintenance of colony morphology and cell wall permeability and integrity. In Mycobacterium tuberculosis (strain ATCC 25618 / H37Rv), this protein is D-alanyl-D-alanine carboxypeptidase DacB2.